Reading from the N-terminus, the 110-residue chain is Small ribosomal subunit protein mS33 (110 aa).

Residues 84–95 (KRRGKGAPKKMK) are compositionally biased toward basic residues. Residues 84 to 110 (KRRGKGAPKKMKKDAAATAKGKGKKKK) are disordered.

Belongs to the mitochondrion-specific ribosomal protein mS33 family. In terms of assembly, component of the mitochondrial small ribosomal subunit (mt-SSU). Mature yeast 74S mitochondrial ribosomes consist of a small (37S) and a large (54S) subunit. The 37S small subunit contains a 15S ribosomal RNA (15S mt-rRNA) and 34 different proteins. The 54S large subunit contains a 21S rRNA (21S mt-rRNA) and 46 different proteins.

The protein resides in the mitochondrion. Its function is as follows. Component of the mitochondrial ribosome (mitoribosome), a dedicated translation machinery responsible for the synthesis of mitochondrial genome-encoded proteins, including at least some of the essential transmembrane subunits of the mitochondrial respiratory chain. The mitoribosomes are attached to the mitochondrial inner membrane and translation products are cotranslationally integrated into the membrane. This chain is Small ribosomal subunit protein mS33 (RSM27), found in Saccharomyces cerevisiae (strain ATCC 204508 / S288c) (Baker's yeast).